We begin with the raw amino-acid sequence, 637 residues long: Threonine--tRNA ligase (637 aa).

Positions 1-61 constitute a TGS domain; sequence MLNITLPDGS…VEDSAVQIIT (61 aa). Residues 242–533 are catalytic; it reads DHRKLGKQLD…LIENHAGSFP (292 aa). 3 residues coordinate Zn(2+): Cys333, His384, and His510.

It belongs to the class-II aminoacyl-tRNA synthetase family. As to quaternary structure, homodimer. It depends on Zn(2+) as a cofactor.

It localises to the cytoplasm. The catalysed reaction is tRNA(Thr) + L-threonine + ATP = L-threonyl-tRNA(Thr) + AMP + diphosphate + H(+). Catalyzes the attachment of threonine to tRNA(Thr) in a two-step reaction: L-threonine is first activated by ATP to form Thr-AMP and then transferred to the acceptor end of tRNA(Thr). Also edits incorrectly charged L-seryl-tRNA(Thr). The protein is Threonine--tRNA ligase of Neisseria meningitidis serogroup B (strain ATCC BAA-335 / MC58).